Consider the following 282-residue polypeptide: Glutamate--LysW ligase ArgX (282 aa).

Residues Lys87, Lys127, 131–137, and 167–178 contribute to the ATP site; these read GSWGRLV and QEYIQYKGRDIR. The 187-residue stretch at 91–277 folds into the ATP-grasp domain; that stretch reads YSKLYREGIP…VAQKLVEYIK (187 aa). Arg192 contacts substrate. Asn202 lines the ATP pocket. Substrate is bound at residue 203-204; sequence VA. Mg(2+) contacts are provided by Asp237, Glu250, and Asn252. Residue 256-260 coordinates substrate; it reads EFKGF. Positions 259 to 260 match the GF motif that is essential for ArgX substrate specificity motif; that stretch reads GF.

It belongs to the RimK family. LysX subfamily. As to quaternary structure, homotetramer. Interacts with LysW. Mg(2+) serves as cofactor.

The enzyme catalyses [amino-group carrier protein]-C-terminal-L-glutamate + L-glutamate + ATP = [amino-group carrier protein]-C-terminal-gamma-(L-glutamyl)-L-glutamate + ADP + phosphate + H(+). The protein operates within amino-acid biosynthesis; L-arginine biosynthesis. Functionally, catalyzes the ATP-dependent formation of a covalent bond between the amino group of glutamate and the gamma-carboxyl group of the C-terminal glutamate residue in LysW. The protein is Glutamate--LysW ligase ArgX of Sulfurisphaera tokodaii (strain DSM 16993 / JCM 10545 / NBRC 100140 / 7) (Sulfolobus tokodaii).